Consider the following 402-residue polypeptide: Homoserine O-acetyltransferase (402 aa).

In terms of domain architecture, AB hydrolase-1 spans 38-359 (NAVLVCHALT…HGHDAFLVEP (322 aa)). Ser-146 serves as the catalytic Nucleophile. Residue Arg-217 coordinates substrate. Catalysis depends on residues Asp-319 and His-352. Asp-353 is a binding site for substrate.

The protein belongs to the AB hydrolase superfamily. MetX family. In terms of assembly, homodimer.

Its subcellular location is the cytoplasm. It catalyses the reaction L-homoserine + acetyl-CoA = O-acetyl-L-homoserine + CoA. The protein operates within amino-acid biosynthesis; L-methionine biosynthesis via de novo pathway; O-acetyl-L-homoserine from L-homoserine: step 1/1. Functionally, transfers an acetyl group from acetyl-CoA to L-homoserine, forming acetyl-L-homoserine. This chain is Homoserine O-acetyltransferase, found in Haloarcula marismortui (strain ATCC 43049 / DSM 3752 / JCM 8966 / VKM B-1809) (Halobacterium marismortui).